Consider the following 149-residue polypeptide: D-aminoacyl-tRNA deacylase (149 aa).

A Gly-cisPro motif, important for rejection of L-amino acids motif is present at residues 137–138 (GP).

It belongs to the DTD family. As to quaternary structure, homodimer.

Its subcellular location is the cytoplasm. The enzyme catalyses glycyl-tRNA(Ala) + H2O = tRNA(Ala) + glycine + H(+). It carries out the reaction a D-aminoacyl-tRNA + H2O = a tRNA + a D-alpha-amino acid + H(+). In terms of biological role, an aminoacyl-tRNA editing enzyme that deacylates mischarged D-aminoacyl-tRNAs. Also deacylates mischarged glycyl-tRNA(Ala), protecting cells against glycine mischarging by AlaRS. Acts via tRNA-based rather than protein-based catalysis; rejects L-amino acids rather than detecting D-amino acids in the active site. By recycling D-aminoacyl-tRNA to D-amino acids and free tRNA molecules, this enzyme counteracts the toxicity associated with the formation of D-aminoacyl-tRNA entities in vivo and helps enforce protein L-homochirality. The chain is D-aminoacyl-tRNA deacylase from Thioalkalivibrio sulfidiphilus (strain HL-EbGR7).